The sequence spans 24 residues: LFGFLIPLLPHIIGAIPQVIGAIR.

This sequence belongs to the grammistin family. Group 1 subfamily. In terms of assembly, exists as aggregates of 3-4 molecules. Expressed by the skin glands.

The protein localises to the secreted. Thanks to its abundant amphiphilic alpha-helices, it may integrate into membrane phospholipids, leading to lysis of the membrane. Its high hemolytic activity is inhibited by phospholipids, but not by cholesterol. Has antibacterial activity with a broad spectrum against various species of bacteria including both Gram-positive and Gram-negative groups. Also has high ichthyotoxic activity. In Grammistes sexlineatus (Goldenstriped soapfish), this protein is Grammistin Gs G.